The sequence spans 353 residues: Protein RecA (353 aa).

67-74 serves as a coordination point for ATP; the sequence is GPESSGKT.

It belongs to the RecA family.

It is found in the cytoplasm. Its function is as follows. Can catalyze the hydrolysis of ATP in the presence of single-stranded DNA, the ATP-dependent uptake of single-stranded DNA by duplex DNA, and the ATP-dependent hybridization of homologous single-stranded DNAs. It interacts with LexA causing its activation and leading to its autocatalytic cleavage. In Shewanella sediminis (strain HAW-EB3), this protein is Protein RecA.